Reading from the N-terminus, the 290-residue chain is Mitochondrial dicarboxylate carrier (290 aa).

Solcar repeat units lie at residues 6–90 (TKRL…VKKQ), 101–188 (QKAL…IKQT), and 197–281 (DNLQ…LRLK). 3 helical membrane passes run 12 to 32 (WYFGGVAGAMAACCTHPLDLL), 65 to 84 (GVSASVLRQLTYSTTRFGIY), and 103 to 123 (ALLAGFAGACGGMVGTPGDLV). Position 159 is an N6-acetyllysine (K159). The next 3 membrane-spanning stretches (helical) occupy residues 163-182 (GATMATSRAILMTIGQLSFY), 203-223 (FASSISAASVATVMTQPLDVM), and 256-276 (GFIPAWARLAPHTVLTFIFFE).

It belongs to the mitochondrial carrier (TC 2.A.29) family.

It is found in the mitochondrion inner membrane. The catalysed reaction is (S)-malate(in) + phosphate(out) = (S)-malate(out) + phosphate(in). It catalyses the reaction malonate(out) + (S)-malate(in) = malonate(in) + (S)-malate(out). It carries out the reaction (S)-malate(in) + succinate(out) = (S)-malate(out) + succinate(in). The enzyme catalyses (S)-malate(in) + sulfate(out) = (S)-malate(out) + sulfate(in). The catalysed reaction is 2 thiosulfate(out) + (S)-malate(in) = 2 thiosulfate(in) + (S)-malate(out). It catalyses the reaction malonate(out) + phosphate(in) = malonate(in) + phosphate(out). It carries out the reaction succinate(out) + phosphate(in) = succinate(in) + phosphate(out). The enzyme catalyses sulfate(out) + phosphate(in) = sulfate(in) + phosphate(out). The catalysed reaction is 2 thiosulfate(out) + phosphate(in) = 2 thiosulfate(in) + phosphate(out). It catalyses the reaction malonate(out) + succinate(in) = malonate(in) + succinate(out). Catalyzes the electroneutral exchange or flux of physiologically important metabolites such as dicarboxylates (malonate, malate, succinate), inorganic sulfur-containing anions, and phosphate, across mitochondrial inner membrane. Plays an important role in gluconeogenesis, fatty acid metabolism, urea synthesis, and sulfur metabolism, by supplying the substrates for the different metabolic processes. In Caenorhabditis elegans, this protein is Mitochondrial dicarboxylate carrier.